Here is a 51-residue protein sequence, read N- to C-terminus: Insulin (51 aa).

Intrachain disulfides connect Cys-8–Cys-37, Cys-20–Cys-50, and Cys-36–Cys-41.

Belongs to the insulin family. Heterodimer of a B chain and an A chain linked by two disulfide bonds.

Its subcellular location is the secreted. Its function is as follows. Insulin decreases blood glucose concentration. It increases cell permeability to monosaccharides, amino acids and fatty acids. It accelerates glycolysis, the pentose phosphate cycle, and glycogen synthesis in liver. The polypeptide is Insulin (Seriola quinqueradiata (Five-ray yellowtail)).